We begin with the raw amino-acid sequence, 1025 residues long: Synapsin (1025 aa).

Disordered regions lie at residues Met1–Ser94, Val439–Ser784, Tyr872–Asp910, and Asp995–Lys1025. Residues Thr34–Gly52 show a composition bias toward pro residues. A compositionally biased stretch (low complexity) spans Ser454–Glu463. Over residues Pro472–Pro492 the composition is skewed to pro residues. Composition is skewed to low complexity over residues Val499–Ser546 and Ser594–Phe626. Ser539 bears the Phosphoserine mark. Polar residues predominate over residues Thr651–Thr673. Over residues Gln690–Ser702 the composition is skewed to basic and acidic residues. The segment covering Lys703 to Ser725 has biased composition (low complexity). Over residues Arg726 to Gln735 the composition is skewed to polar residues. The span at Ser736–Thr749 shows a compositional bias: pro residues. Positions Asn750–Asn759 are enriched in polar residues. Over residues Ser760–Leu772 the composition is skewed to low complexity. Polar residues predominate over residues Tyr872–Asn904. The span at Asp995–Ser1007 shows a compositional bias: low complexity.

It belongs to the synapsin family. In terms of assembly, identified in a complex with Syt1 and nwk. Widely expressed in the embryonic and adult nervous system synaptic terminals.

The protein resides in the synapse. In terms of biological role, plays a significant role in nervous system function, which is subtle at the cellular level but manifests itself in complex behavior. In Drosophila melanogaster (Fruit fly), this protein is Synapsin (Syn).